We begin with the raw amino-acid sequence, 502 residues long: Probable glycine dehydrogenase (decarboxylating) subunit 2 (502 aa).

K273 is modified (N6-(pyridoxal phosphate)lysine).

This sequence belongs to the GcvP family. C-terminal subunit subfamily. As to quaternary structure, the glycine cleavage system is composed of four proteins: P, T, L and H. In this organism, the P 'protein' is a heterodimer of two subunits. The cofactor is pyridoxal 5'-phosphate.

It catalyses the reaction N(6)-[(R)-lipoyl]-L-lysyl-[glycine-cleavage complex H protein] + glycine + H(+) = N(6)-[(R)-S(8)-aminomethyldihydrolipoyl]-L-lysyl-[glycine-cleavage complex H protein] + CO2. Its function is as follows. The glycine cleavage system catalyzes the degradation of glycine. The P protein binds the alpha-amino group of glycine through its pyridoxal phosphate cofactor; CO(2) is released and the remaining methylamine moiety is then transferred to the lipoamide cofactor of the H protein. The chain is Probable glycine dehydrogenase (decarboxylating) subunit 2 from Pyrococcus furiosus (strain ATCC 43587 / DSM 3638 / JCM 8422 / Vc1).